A 313-amino-acid polypeptide reads, in one-letter code: tRNA-cytidine(32) 2-sulfurtransferase (313 aa).

The PP-loop motif motif lies at 46 to 51 (SGGKDS). [4Fe-4S] cluster contacts are provided by Cys-121, Cys-124, and Cys-212.

The protein belongs to the TtcA family. Homodimer. Mg(2+) serves as cofactor. Requires [4Fe-4S] cluster as cofactor.

The protein localises to the cytoplasm. It catalyses the reaction cytidine(32) in tRNA + S-sulfanyl-L-cysteinyl-[cysteine desulfurase] + AH2 + ATP = 2-thiocytidine(32) in tRNA + L-cysteinyl-[cysteine desulfurase] + A + AMP + diphosphate + H(+). It participates in tRNA modification. In terms of biological role, catalyzes the ATP-dependent 2-thiolation of cytidine in position 32 of tRNA, to form 2-thiocytidine (s(2)C32). The sulfur atoms are provided by the cysteine/cysteine desulfurase (IscS) system. In Nitrosomonas eutropha (strain DSM 101675 / C91 / Nm57), this protein is tRNA-cytidine(32) 2-sulfurtransferase.